Here is a 254-residue protein sequence, read N- to C-terminus: Triosephosphate isomerase (254 aa).

10 to 12 (NWK) contacts substrate. Catalysis depends on His-96, which acts as the Electrophile. The Proton acceptor role is filled by Glu-168. Residues Gly-174, Ser-214, and 235 to 236 (GG) each bind substrate.

It belongs to the triosephosphate isomerase family. In terms of assembly, homodimer.

The protein localises to the cytoplasm. It catalyses the reaction D-glyceraldehyde 3-phosphate = dihydroxyacetone phosphate. Its pathway is carbohydrate biosynthesis; gluconeogenesis. It functions in the pathway carbohydrate degradation; glycolysis; D-glyceraldehyde 3-phosphate from glycerone phosphate: step 1/1. Involved in the gluconeogenesis. Catalyzes stereospecifically the conversion of dihydroxyacetone phosphate (DHAP) to D-glyceraldehyde-3-phosphate (G3P). This Rhodopirellula baltica (strain DSM 10527 / NCIMB 13988 / SH1) protein is Triosephosphate isomerase.